A 206-amino-acid polypeptide reads, in one-letter code: Interleukin-24 (206 aa).

The signal sequence occupies residues 1–51; it reads MNFQQRLQSLWTLARPFCPPLLATASQMQMVVLPCLGFTLLLWSQVSGAQG. The cysteines at positions 59 and 106 are disulfide-linked. N-linked (GlcNAc...) asparagine glycans are attached at residues Asn-85 and Asn-99. Lys-122 is covalently cross-linked (Glycyl lysine isopeptide (Lys-Gly) (interchain with G-Cter in ubiquitin)). Asn-126 carries an N-linked (GlcNAc...) asparagine glycan.

This sequence belongs to the IL-10 family. Post-translationally, glycosylated. Ubiquitination at Lys-122 promotes proteasomal degradation. In terms of tissue distribution, up-regulated in melanoma cells induced to terminally differentiate.

It localises to the secreted. Its function is as follows. Multifunctional cytokine mainly produced by T-cells that plays a regulatory role in immune response, tissue homeostasis, host defense, and oncogenesis. Possesses antiviral functions and induces the type I interferon response during influenza infection. Signals through two receptor complexes IL20RA/IL20RB or IL20RB/IL22RA1. In turn, stimulates the JAK1-STAT3 and MAPK pathways and promotes the secretion of pro-inflammatory mediators including IL8 and MMP1. Intracellularly, maintains endoplasmic reticulum homeostasis by restricting the eIF2alpha-CHOP pathway-mediated stress signal. In addition, acts as a quality control mechanism for the ubiquitin proteasome system by alerting the cell to proteasome dysfunction through activation of PKR/EIF2AK2. The polypeptide is Interleukin-24 (IL24) (Homo sapiens (Human)).